The following is a 330-amino-acid chain: T-cell leukemia homeobox protein 1 (330 aa).

Residues 186-207 (DRFTGHPYQNRTPPKKKKPRTS) form a disordered region. The homeobox DNA-binding region spans 201-260 (KKKPRTSFTRLQICELEKRFHRQKYLASAERAALAKALKMTDAQVKTWFQNRRTKWRRQT). K236 carries the post-translational modification N6-acetyllysine.

Interacts with MEIS1, MEIS2, PBX1, PBX2 and PBX3.

It localises to the nucleus. In terms of biological role, controls the genesis of the spleen. Binds to the DNA sequence 5'-GGCGGTAAGTGG-3'. The polypeptide is T-cell leukemia homeobox protein 1 (TLX1) (Homo sapiens (Human)).